The following is a 427-amino-acid chain: UPF0229 protein YeaH (427 aa).

Residues 87-110 form a disordered region; that stretch reads RIERSQGGGGGSGSGQGQASQDGE. Over residues 92-102 the composition is skewed to gly residues; that stretch reads QGGGGGSGSGQ.

The protein belongs to the UPF0229 family.

The sequence is that of UPF0229 protein YeaH from Escherichia coli O6:K15:H31 (strain 536 / UPEC).